We begin with the raw amino-acid sequence, 264 residues long: Isoprenyl transferase (264 aa).

Asp43 is an active-site residue. Asp43 contacts Mg(2+). Residues Gly44–Arg47, Trp48, Arg56, His60, and Ser88–Glu90 contribute to the substrate site. Residue Asn91 is the Proton acceptor of the active site. Residues Trp92, Arg94, Arg211, and Arg217–Ser219 contribute to the substrate site. A Mg(2+)-binding site is contributed by Glu230.

It belongs to the UPP synthase family. Homodimer. Mg(2+) serves as cofactor.

In terms of biological role, catalyzes the condensation of isopentenyl diphosphate (IPP) with allylic pyrophosphates generating different type of terpenoids. The protein is Isoprenyl transferase of Bifidobacterium longum (strain NCC 2705).